A 756-amino-acid chain; its full sequence is Ent-kaurene synthase, chloroplastic (756 aa).

Positions 507 and 511 each coordinate Mg(2+). A DDXXD motif motif is present at residues 507–511 (DDFFD). A helical membrane pass occupies residues 606 to 622 (YVSFALGPIVLPCLYLV). Positions 651, 655, and 659 each coordinate Mg(2+).

It belongs to the terpene synthase family. Requires Mg(2+) as cofactor. As to expression, present in both leaves and flowers.

Its subcellular location is the plastid. The protein resides in the chloroplast membrane. The catalysed reaction is ent-copalyl diphosphate = ent-kaur-16-ene + diphosphate. It functions in the pathway plant hormone biosynthesis; gibberellin biosynthesis. In terms of biological role, involved in the biosynthesis of labdane-type diterpenoid including marrubiin and other labdane-related furanoid diterpenoids with potential applications as anti-diabetics, analgesics or vasorelaxants. Terpene synthase that produces ent-kaurene from ent-copalyl diphosphate (ent-CPP). This chain is Ent-kaurene synthase, chloroplastic, found in Marrubium vulgare (White horehound).